We begin with the raw amino-acid sequence, 438 residues long: tRNA(Ile)-lysidine synthase (438 aa).

ATP is bound at residue 19–24; it reads SGGIDS.

Belongs to the tRNA(Ile)-lysidine synthase family.

It is found in the cytoplasm. It catalyses the reaction cytidine(34) in tRNA(Ile2) + L-lysine + ATP = lysidine(34) in tRNA(Ile2) + AMP + diphosphate + H(+). Ligates lysine onto the cytidine present at position 34 of the AUA codon-specific tRNA(Ile) that contains the anticodon CAU, in an ATP-dependent manner. Cytidine is converted to lysidine, thus changing the amino acid specificity of the tRNA from methionine to isoleucine. This chain is tRNA(Ile)-lysidine synthase, found in Buchnera aphidicola subsp. Baizongia pistaciae (strain Bp).